The chain runs to 329 residues: Clavesin-2 (329 aa).

The region spanning 96–257 (IKQALKDGFP…ELGGMLPPYD (162 aa)) is the CRAL-TRIO domain. Positions 293–329 (SPKTMKRSQSVVEPGVLKRPEKVKSEEENMQPLLSLD) are disordered. A compositionally biased stretch (basic and acidic residues) spans 308 to 319 (VLKRPEKVKSEE).

It is found in the golgi apparatus. The protein resides in the trans-Golgi network membrane. It localises to the early endosome membrane. Its subcellular location is the cytoplasmic vesicle. The protein localises to the clathrin-coated vesicle. Its function is as follows. Required for normal morphology of late endosomes and/or lysosomes in neurons. Binds phosphatidylinositol 3,5-bisphosphate (PtdIns(3,5)P2). This Danio rerio (Zebrafish) protein is Clavesin-2 (clvs2).